The sequence spans 472 residues: Siroheme synthase (472 aa).

The precorrin-2 dehydrogenase /sirohydrochlorin ferrochelatase stretch occupies residues 1–203 (MNYLPIFIDI…GKIQEAKADL (203 aa)). Residues 22-23 (DI) and 43-44 (KS) contribute to the NAD(+) site. Residue serine 128 is modified to Phosphoserine. Positions 216–472 (GEVYLVGGGP…SSKKSYLFGG (257 aa)) are uroporphyrinogen-III C-methyltransferase. Proline 225 serves as a coordination point for S-adenosyl-L-methionine. Aspartate 248 serves as the catalytic Proton acceptor. Lysine 270 functions as the Proton donor in the catalytic mechanism. S-adenosyl-L-methionine contacts are provided by residues 301–303 (GGD), isoleucine 306, 331–332 (TA), methionine 383, and glycine 412.

The protein in the N-terminal section; belongs to the precorrin-2 dehydrogenase / sirohydrochlorin ferrochelatase family. It in the C-terminal section; belongs to the precorrin methyltransferase family.

The enzyme catalyses uroporphyrinogen III + 2 S-adenosyl-L-methionine = precorrin-2 + 2 S-adenosyl-L-homocysteine + H(+). The catalysed reaction is precorrin-2 + NAD(+) = sirohydrochlorin + NADH + 2 H(+). It catalyses the reaction siroheme + 2 H(+) = sirohydrochlorin + Fe(2+). It participates in cofactor biosynthesis; adenosylcobalamin biosynthesis; precorrin-2 from uroporphyrinogen III: step 1/1. The protein operates within cofactor biosynthesis; adenosylcobalamin biosynthesis; sirohydrochlorin from precorrin-2: step 1/1. Its pathway is porphyrin-containing compound metabolism; siroheme biosynthesis; precorrin-2 from uroporphyrinogen III: step 1/1. It functions in the pathway porphyrin-containing compound metabolism; siroheme biosynthesis; siroheme from sirohydrochlorin: step 1/1. It participates in porphyrin-containing compound metabolism; siroheme biosynthesis; sirohydrochlorin from precorrin-2: step 1/1. Multifunctional enzyme that catalyzes the SAM-dependent methylations of uroporphyrinogen III at position C-2 and C-7 to form precorrin-2 via precorrin-1. Then it catalyzes the NAD-dependent ring dehydrogenation of precorrin-2 to yield sirohydrochlorin. Finally, it catalyzes the ferrochelation of sirohydrochlorin to yield siroheme. The protein is Siroheme synthase of Ruthia magnifica subsp. Calyptogena magnifica.